Reading from the N-terminus, the 168-residue chain is Cyclic pyranopterin monophosphate synthase (168 aa).

Residues 75-77 (MCH) and 115-116 (ME) contribute to the substrate site. The active site involves D130.

It belongs to the MoaC family. Homohexamer; trimer of dimers.

It carries out the reaction (8S)-3',8-cyclo-7,8-dihydroguanosine 5'-triphosphate = cyclic pyranopterin phosphate + diphosphate. It functions in the pathway cofactor biosynthesis; molybdopterin biosynthesis. In terms of biological role, catalyzes the conversion of (8S)-3',8-cyclo-7,8-dihydroguanosine 5'-triphosphate to cyclic pyranopterin monophosphate (cPMP). In Bacillus licheniformis (strain ATCC 14580 / DSM 13 / JCM 2505 / CCUG 7422 / NBRC 12200 / NCIMB 9375 / NCTC 10341 / NRRL NRS-1264 / Gibson 46), this protein is Cyclic pyranopterin monophosphate synthase.